The following is a 628-amino-acid chain: Phosphomethylpyrimidine synthase (628 aa).

Substrate contacts are provided by residues Asn228, Met257, Tyr286, His322, 342 to 344 (SRG), 383 to 386 (DGLR), and Glu422. His426 is a Zn(2+) binding site. Residue Tyr449 coordinates substrate. His490 contacts Zn(2+). [4Fe-4S] cluster-binding residues include Cys570, Cys573, and Cys578.

It belongs to the ThiC family. In terms of assembly, homodimer. It depends on [4Fe-4S] cluster as a cofactor.

It catalyses the reaction 5-amino-1-(5-phospho-beta-D-ribosyl)imidazole + S-adenosyl-L-methionine = 4-amino-2-methyl-5-(phosphooxymethyl)pyrimidine + CO + 5'-deoxyadenosine + formate + L-methionine + 3 H(+). It functions in the pathway cofactor biosynthesis; thiamine diphosphate biosynthesis. Catalyzes the synthesis of the hydroxymethylpyrimidine phosphate (HMP-P) moiety of thiamine from aminoimidazole ribotide (AIR) in a radical S-adenosyl-L-methionine (SAM)-dependent reaction. This chain is Phosphomethylpyrimidine synthase, found in Methylibium petroleiphilum (strain ATCC BAA-1232 / LMG 22953 / PM1).